Reading from the N-terminus, the 304-residue chain is Pseudouridine-5'-phosphate glycosidase (304 aa).

The active-site Proton donor is Glu25. 2 residues coordinate substrate: Lys88 and Val108. Asp140 is a binding site for Mn(2+). A substrate-binding site is contributed by 142–144 (SAD). Lys161 functions as the Nucleophile in the catalytic mechanism.

This sequence belongs to the pseudouridine-5'-phosphate glycosidase family. As to quaternary structure, homotrimer. The cofactor is Mn(2+).

The enzyme catalyses D-ribose 5-phosphate + uracil = psi-UMP + H2O. Functionally, catalyzes the reversible cleavage of pseudouridine 5'-phosphate (PsiMP) to ribose 5-phosphate and uracil. Functions biologically in the cleavage direction, as part of a pseudouridine degradation pathway. This chain is Pseudouridine-5'-phosphate glycosidase, found in Paracoccus denitrificans (strain Pd 1222).